Consider the following 166-residue polypeptide: MANRKIFLITSLIISLLLIHIFIFSPLNEPEKNAKAGPLGLSDVSVPSAPKLPAKDSTDFEVFLENPVIIFSRPGCPYSAAAKKLLTETLRLDPPAVVVEVTDYEHTQELRDWLSSISDISTMPNIFVGGHSIGGSDSVRALYQEEKLQSTLDEWTHNKVLILPTD.

The 104-residue stretch at 56 to 159 (DSTDFEVFLE…STLDEWTHNK (104 aa)) folds into the Glutaredoxin domain. Cys-76 serves as a coordination point for [2Fe-2S] cluster.

Belongs to the glutaredoxin family. Monothiol subfamily. In terms of assembly, homodimer.

Its subcellular location is the nucleus. Its function is as follows. Monothiol glutaredoxin involved in the biogenesis of iron-sulfur clusters. Binds one iron-sulfur cluster per dimer. The iron-sulfur cluster is bound between subunits, and is complexed by a bound glutathione and a cysteine residue from each subunit. The chain is Monothiol glutaredoxin-3 (grx3) from Schizosaccharomyces pombe (strain 972 / ATCC 24843) (Fission yeast).